Here is a 316-residue protein sequence, read N- to C-terminus: Glutathione synthetase (316 aa).

The 186-residue stretch at 125–310 (KLFTAWFSDL…ITGMLMDAIE (186 aa)) folds into the ATP-grasp domain. 151-207 (WEKHSDIILKPLDGMGGASIFRVKEGDPNLGVIAETLTEHGTRYCMAQNYLPAIKDG) is a binding site for ATP. Mg(2+)-binding residues include Glu281 and Asn283.

The protein belongs to the prokaryotic GSH synthase family. It depends on Mg(2+) as a cofactor. The cofactor is Mn(2+).

It carries out the reaction gamma-L-glutamyl-L-cysteine + glycine + ATP = glutathione + ADP + phosphate + H(+). It participates in sulfur metabolism; glutathione biosynthesis; glutathione from L-cysteine and L-glutamate: step 2/2. This is Glutathione synthetase from Escherichia coli O6:H1 (strain CFT073 / ATCC 700928 / UPEC).